The sequence spans 364 residues: UDP-N-acetylglucosamine--N-acetylmuramyl-(pentapeptide) pyrophosphoryl-undecaprenol N-acetylglucosamine transferase (364 aa).

UDP-N-acetyl-alpha-D-glucosamine is bound by residues Thr-10–Gly-12, Asn-124, Arg-166, Ser-196, Ile-252, and Gln-297.

Belongs to the glycosyltransferase 28 family. MurG subfamily.

It localises to the cell membrane. It carries out the reaction di-trans,octa-cis-undecaprenyl diphospho-N-acetyl-alpha-D-muramoyl-L-alanyl-D-glutamyl-meso-2,6-diaminopimeloyl-D-alanyl-D-alanine + UDP-N-acetyl-alpha-D-glucosamine = di-trans,octa-cis-undecaprenyl diphospho-[N-acetyl-alpha-D-glucosaminyl-(1-&gt;4)]-N-acetyl-alpha-D-muramoyl-L-alanyl-D-glutamyl-meso-2,6-diaminopimeloyl-D-alanyl-D-alanine + UDP + H(+). The protein operates within cell wall biogenesis; peptidoglycan biosynthesis. Functionally, cell wall formation. Catalyzes the transfer of a GlcNAc subunit on undecaprenyl-pyrophosphoryl-MurNAc-pentapeptide (lipid intermediate I) to form undecaprenyl-pyrophosphoryl-MurNAc-(pentapeptide)GlcNAc (lipid intermediate II). This chain is UDP-N-acetylglucosamine--N-acetylmuramyl-(pentapeptide) pyrophosphoryl-undecaprenol N-acetylglucosamine transferase, found in Ruminiclostridium cellulolyticum (strain ATCC 35319 / DSM 5812 / JCM 6584 / H10) (Clostridium cellulolyticum).